A 192-amino-acid polypeptide reads, in one-letter code: uncharacterized protein (192 aa).

Positions 71–100 (NNVLPEPSKPNNPVVNPPVSPIQPKTDPEQ) are disordered. Positions 77 to 91 (PSKPNNPVVNPPVSP) are enriched in pro residues.

This is an uncharacterized protein from Caenorhabditis elegans.